The primary structure comprises 126 residues: uncharacterized protein (126 aa).

This is an uncharacterized protein from Saccharomyces cerevisiae (strain ATCC 204508 / S288c) (Baker's yeast).